The sequence spans 104 residues: Large ribosomal subunit protein uL24 (104 aa).

It belongs to the universal ribosomal protein uL24 family. As to quaternary structure, part of the 50S ribosomal subunit.

Functionally, one of two assembly initiator proteins, it binds directly to the 5'-end of the 23S rRNA, where it nucleates assembly of the 50S subunit. Its function is as follows. One of the proteins that surrounds the polypeptide exit tunnel on the outside of the subunit. This chain is Large ribosomal subunit protein uL24, found in Herminiimonas arsenicoxydans.